A 615-amino-acid chain; its full sequence is MFS-type transporter 1 (615 aa).

A disordered region spans residues 1–85 (MTALAAVPDL…GNNVSPHGRH (85 aa)). Polar residues predominate over residues 16–53 (PSTTTVHSPNYSGSPADISSSPTTRAVSRNTARQTASA). N-linked (GlcNAc...) asparagine glycosylation occurs at Asn-25. 6 helical membrane-spanning segments follow: residues 94–114 (CLVI…SGIL), 138–158 (VYSL…HIIG), 162–182 (VWIT…RSAT), 192–212 (VLGV…TNGF), 222–242 (FAFQ…LGGI), and 251–271 (FGFY…LVVL). The N-linked (GlcNAc...) asparagine glycan is linked to Asn-302. The next 8 helical transmembrane spans lie at 320 to 340 (WTGT…FSVV), 351 to 371 (QNIA…LWVG), 397 to 417 (AAVF…ALYF), 432 to 452 (FLPM…LVET), 455 to 475 (VRWL…IMAL), 488 to 508 (FAML…NLII), 522 to 542 (AVFN…TAVV), and 585 to 605 (AAFW…FLGL).

It belongs to the major facilitator superfamily. EmrB family.

It is found in the membrane. MFS-type transporter; part of the gene cluster that mediates the biosynthesis of pyriculol and pyriculariol, two heptaketides that induce lesion formation upon application on rice leaves but are dispensable for pathogenicity. With the ABC transporter ABC7, is most likely responsible for pyriculol and pyriculariol secretion and thereby may contribute to intrinsic resistance. The chain is MFS-type transporter 1 from Pyricularia oryzae (strain 70-15 / ATCC MYA-4617 / FGSC 8958) (Rice blast fungus).